Consider the following 609-residue polypeptide: Putative pectinesterase/pectinesterase inhibitor 45 (609 aa).

The helical transmembrane segment at 25-45 threads the bilayer; it reads IILGVVSVLVVAAAIIGGAFA. N-linked (GlcNAc...) asparagine glycans are attached at residues asparagine 51, asparagine 62, asparagine 100, asparagine 114, asparagine 183, asparagine 229, asparagine 296, asparagine 306, asparagine 346, and asparagine 362. A disordered region spans residues 54-87; the sequence is QEQGKTTNNKSKDSPTKSESPSPKPPSSAAQTVK. The tract at residues 89–241 is pectinesterase inhibitor 45; it reads GQVDKIIQTL…QVLTSNSLAM (153 aa). The tract at residues 296 to 593 is pectinesterase 45; that stretch reads NATVAKDGSG…FTVGPFLQGE (298 aa). Substrate is bound by residues threonine 371 and glutamine 401. Catalysis depends on aspartate 424, which acts as the Proton donor; for pectinesterase activity. An intrachain disulfide couples cysteine 438 to cysteine 458. Aspartate 445 (nucleophile; for pectinesterase activity) is an active-site residue. Residue asparagine 491 is glycosylated (N-linked (GlcNAc...) asparagine). 2 residues coordinate substrate: arginine 513 and tryptophan 515.

It in the N-terminal section; belongs to the PMEI family. The protein in the C-terminal section; belongs to the pectinesterase family. Expressed in flower buds and pollen.

The protein resides in the membrane. The catalysed reaction is [(1-&gt;4)-alpha-D-galacturonosyl methyl ester](n) + n H2O = [(1-&gt;4)-alpha-D-galacturonosyl](n) + n methanol + n H(+). It participates in glycan metabolism; pectin degradation; 2-dehydro-3-deoxy-D-gluconate from pectin: step 1/5. Acts in the modification of cell walls via demethylesterification of cell wall pectin. In Arabidopsis thaliana (Mouse-ear cress), this protein is Putative pectinesterase/pectinesterase inhibitor 45 (PME45).